The sequence spans 276 residues: MTRPLSYFHLHLISDATGETLLAAGRAAAAQYANARAIEHIYPLIRTEKQLRKVLEGIDAEPGIVLYTIVDQKLAAIIDDSCAEMGVPSVSVLEPVLNTFQSYLGAPAHRRASAQHVLNADYFRRIDALNFTMEHDDGQLPYDIEEADVILVGISRTSKTPTSIYLANRGIKATNVPIVLGIPLPEVLFTAKRPLIVGLVATAERISQIRQNRPLGNVPSLDTGLYTDRVSISEELAYARNICNRNGWPIIDVSRRSIEETAAAILALLRAHNEKG.

Position 153-160 (153-160 (GISRTSKT)) interacts with ADP.

Belongs to the pyruvate, phosphate/water dikinase regulatory protein family. PDRP subfamily.

It carries out the reaction N(tele)-phospho-L-histidyl/L-threonyl-[pyruvate, phosphate dikinase] + ADP = N(tele)-phospho-L-histidyl/O-phospho-L-threonyl-[pyruvate, phosphate dikinase] + AMP + H(+). It catalyses the reaction N(tele)-phospho-L-histidyl/O-phospho-L-threonyl-[pyruvate, phosphate dikinase] + phosphate + H(+) = N(tele)-phospho-L-histidyl/L-threonyl-[pyruvate, phosphate dikinase] + diphosphate. In terms of biological role, bifunctional serine/threonine kinase and phosphorylase involved in the regulation of the pyruvate, phosphate dikinase (PPDK) by catalyzing its phosphorylation/dephosphorylation. The polypeptide is Putative pyruvate, phosphate dikinase regulatory protein (Brucella anthropi (strain ATCC 49188 / DSM 6882 / CCUG 24695 / JCM 21032 / LMG 3331 / NBRC 15819 / NCTC 12168 / Alc 37) (Ochrobactrum anthropi)).